A 1407-amino-acid chain; its full sequence is DNA-directed RNA polymerase subunit beta' (1407 aa).

Positions 70, 72, 85, and 88 each coordinate Zn(2+). 3 residues coordinate Mg(2+): D458, D460, and D462. Positions 814, 888, 895, and 898 each coordinate Zn(2+).

This sequence belongs to the RNA polymerase beta' chain family. The RNAP catalytic core consists of 2 alpha, 1 beta, 1 beta' and 1 omega subunit. When a sigma factor is associated with the core the holoenzyme is formed, which can initiate transcription. Mg(2+) is required as a cofactor. Requires Zn(2+) as cofactor.

The catalysed reaction is RNA(n) + a ribonucleoside 5'-triphosphate = RNA(n+1) + diphosphate. In terms of biological role, DNA-dependent RNA polymerase catalyzes the transcription of DNA into RNA using the four ribonucleoside triphosphates as substrates. The chain is DNA-directed RNA polymerase subunit beta' from Leptothrix cholodnii (strain ATCC 51168 / LMG 8142 / SP-6) (Leptothrix discophora (strain SP-6)).